The sequence spans 143 residues: Transcriptional regulator MraZ (143 aa).

2 consecutive SpoVT-AbrB domains span residues 5–47 (EYTH…PLIE) and 76–119 (ACEC…DAER).

The protein belongs to the MraZ family. As to quaternary structure, forms oligomers.

It is found in the cytoplasm. Its subcellular location is the nucleoid. In Limosilactobacillus fermentum (strain NBRC 3956 / LMG 18251) (Lactobacillus fermentum), this protein is Transcriptional regulator MraZ.